We begin with the raw amino-acid sequence, 147 residues long: Hemoglobin subunit beta-2 (147 aa).

Residue valine 2 is modified to N-acetylvaline. The region spanning histidine 3–histidine 147 is the Globin domain. Phosphoserine is present on serine 13. An N6-succinyllysine modification is found at lysine 18. A phosphoserine mark is found at serine 51 and serine 53. 2 residues coordinate heme b: histidine 64 and histidine 93. An Asymmetric dimethylarginine modification is found at arginine 105. The residue at position 124 (threonine 124) is a Phosphothreonine. Cysteine 126 is modified (phosphoserine; in variant Ser-126).

This sequence belongs to the globin family. Heterotetramer of two alpha chains and two beta chains. In terms of tissue distribution, red blood cells.

Involved in oxygen transport from the lung to the various peripheral tissues. The protein is Hemoglobin subunit beta-2 of Rattus norvegicus (Rat).